The primary structure comprises 387 residues: Cytochrome b (387 aa).

The helical transmembrane segment at 32-52 (LGSLLGLCLVIQIASGVFLAM) threads the bilayer. Heme b-binding residues include H82 and H96. A run of 8 helical transmembrane segments spans residues 85–105 (GASFFFICMYLHIGKALYYGS), 116–136 (IGVVIFILTMAIAFMGYCLVY), 151–171 (LSAIPFIGNDIVPFIWGGFSV), 179–199 (FFALHFLLPFILAALVCMHLM), 225–245 (FIFKDLITVFVFLLIFSLFVF), 289–309 (LGGVIAMFGAILILLSLPYTD), 324–344 (LAFYLFVFNFILLGNLGQLHV), and 350–370 (QLGQFATAYYFAHYIIVVPVI). Positions 183 and 197 each coordinate heme b.

It belongs to the cytochrome b family. Component of the ubiquinol-cytochrome c oxidoreductase (cytochrome b-c1 complex, complex III, CIII), a multisubunit enzyme composed of 10 subunits. The complex is composed of 3 respiratory subunits cytochrome b (COB), cytochrome c1 (CYT1) and Rieske protein (RIP1), 2 core protein subunits COR1 and QCR2, and 5 low-molecular weight protein subunits QCR6, QCR7, QCR8, QCR9 and QCR10. The complex exists as an obligatory dimer and forms supercomplexes (SCs) in the inner mitochondrial membrane with a monomer or a dimer of cytochrome c oxidase (complex IV, CIV), resulting in 2 different assemblies (supercomplexes III(2)IV and III(2)IV(2)). It depends on heme b as a cofactor.

It is found in the mitochondrion inner membrane. Functionally, component of the ubiquinol-cytochrome c oxidoreductase, a multisubunit transmembrane complex that is part of the mitochondrial electron transport chain which drives oxidative phosphorylation. The complex plays an important role in the uptake of multiple carbon sources present in different host niches. This is Cytochrome b from Candida albicans (strain SC5314 / ATCC MYA-2876) (Yeast).